We begin with the raw amino-acid sequence, 360 residues long: Casein kinase II subunit alpha (360 aa).

The 286-residue stretch at 38–323 (YQLVRKLGRG…AQEAMGHEYF (286 aa)) folds into the Protein kinase domain. Residues 44–52 (LGRGKYSEV) and Lys-67 contribute to the ATP site. Residue Asp-155 is the Proton acceptor of the active site. The disordered stretch occupies residues 334–360 (NGTEQADGQGASNSASSQSSDAKIDGA). A compositionally biased stretch (low complexity) spans 338-354 (QADGQGASNSASSQSSD).

Belongs to the protein kinase superfamily. Ser/Thr protein kinase family. CK2 subfamily. In terms of assembly, tetramer of two alpha and two beta chains. In terms of tissue distribution, expressed in a subset of the adult male sensory neurons: CEM head neurons, ray RnB neurons, and hook HOB tail neurons.

Its subcellular location is the cell projection. It is found in the axon. The protein localises to the cilium. The protein resides in the dendrite. It localises to the perikaryon. The catalysed reaction is L-seryl-[protein] + ATP = O-phospho-L-seryl-[protein] + ADP + H(+). It catalyses the reaction L-threonyl-[protein] + ATP = O-phospho-L-threonyl-[protein] + ADP + H(+). Its function is as follows. Casein kinases are operationally defined by their preferential utilization of acidic proteins such as caseins as substrates. The alpha chain contains the catalytic site. May participate in Wnt signaling. Modulates two aspects of male mating behavior; response to hermaphrodite contact and vulval location, acting in the same pathway as lov-1 and pkd-2. The protein is Casein kinase II subunit alpha (kin-3) of Caenorhabditis elegans.